Here is a 342-residue protein sequence, read N- to C-terminus: L-threonine 3-dehydrogenase (342 aa).

C38 provides a ligand contact to Zn(2+). Residues T40 and H43 each act as charge relay system in the active site. Zn(2+)-binding residues include H63, E64, C93, C96, C99, and C107. Residues I175, D195, R200, 262 to 264, and 286 to 287 each bind NAD(+); these read LGI and IY.

The protein belongs to the zinc-containing alcohol dehydrogenase family. As to quaternary structure, homotetramer. The cofactor is Zn(2+).

The protein resides in the cytoplasm. The catalysed reaction is L-threonine + NAD(+) = (2S)-2-amino-3-oxobutanoate + NADH + H(+). The protein operates within amino-acid degradation; L-threonine degradation via oxydo-reductase pathway; glycine from L-threonine: step 1/2. Its function is as follows. Catalyzes the NAD(+)-dependent oxidation of L-threonine to 2-amino-3-ketobutyrate. The protein is L-threonine 3-dehydrogenase of Aeromonas hydrophila subsp. hydrophila (strain ATCC 7966 / DSM 30187 / BCRC 13018 / CCUG 14551 / JCM 1027 / KCTC 2358 / NCIMB 9240 / NCTC 8049).